We begin with the raw amino-acid sequence, 138 residues long: Prefoldin subunit alpha (138 aa).

The protein belongs to the prefoldin subunit alpha family. As to quaternary structure, heterohexamer of two alpha and four beta subunits.

The protein resides in the cytoplasm. Its function is as follows. Molecular chaperone capable of stabilizing a range of proteins. Seems to fulfill an ATP-independent, HSP70-like function in archaeal de novo protein folding. The sequence is that of Prefoldin subunit alpha from Methanosphaera stadtmanae (strain ATCC 43021 / DSM 3091 / JCM 11832 / MCB-3).